The following is a 579-amino-acid chain: 2-isopropylmalate synthase (579 aa).

The Pyruvate carboxyltransferase domain maps to 33–308; the sequence is PRWLSTDLRD…DPGIDFSDIN (276 aa). Mg(2+) contacts are provided by Asp-42, His-247, His-249, and Asn-283. Residues 450–579 form a regulatory domain region; it reads SSDLPVPLAS…IVAPLVAAGR (130 aa).

This sequence belongs to the alpha-IPM synthase/homocitrate synthase family. LeuA type 2 subfamily. Homodimer. Mg(2+) is required as a cofactor.

Its subcellular location is the cytoplasm. It carries out the reaction 3-methyl-2-oxobutanoate + acetyl-CoA + H2O = (2S)-2-isopropylmalate + CoA + H(+). It participates in amino-acid biosynthesis; L-leucine biosynthesis; L-leucine from 3-methyl-2-oxobutanoate: step 1/4. In terms of biological role, catalyzes the condensation of the acetyl group of acetyl-CoA with 3-methyl-2-oxobutanoate (2-ketoisovalerate) to form 3-carboxy-3-hydroxy-4-methylpentanoate (2-isopropylmalate). This chain is 2-isopropylmalate synthase, found in Streptosporangium roseum (strain ATCC 12428 / DSM 43021 / JCM 3005 / KCTC 9067 / NCIMB 10171 / NRRL 2505 / NI 9100).